Here is a 420-residue protein sequence, read N- to C-terminus: Calsequestrin-1 (420 aa).

Residues 1–22 (MKGPWLVLAALCLSLANLGPRG) form the signal peptide. N-linked (GlcNAc...) asparagine glycosylation occurs at asparagine 338. The disordered stretch occupies residues 369–420 (LEGEVNTEDDDDDDDDDDDDDDDDDDDDDDDDDDDDDDDDDDDDDDDDDDDD).

This sequence belongs to the calsequestrin family. As to quaternary structure, monomer; increases in response to a depletion of intracellular calcium. Homodimer. Homotetramer and homopolymer. Can form linear homooligomers. Ca(2+) ions promote oligomerization. Detected in skeletal muscle (at protein level). Detected in skeletal muscle.

It localises to the endoplasmic reticulum. Its subcellular location is the sarcoplasmic reticulum. It is found in the sarcoplasmic reticulum lumen. The protein resides in the sarcoplasmic reticulum membrane. The protein localises to the mitochondrion matrix. Functionally, calsequestrin is a high-capacity, moderate affinity, calcium-binding protein and thus acts as an internal calcium store in muscle. Calcium ions are bound by clusters of acidic residues at the protein surface, often at the interface between subunits. Can bind around 80 Ca(2+) ions. Regulates the release of lumenal Ca(2+) via the calcium release channel RYR1; this plays an important role in triggering muscle contraction. Negatively regulates store-operated Ca(2+) entry (SOCE) activity. This chain is Calsequestrin-1, found in Pelophylax lessonae (Pool frog).